A 486-amino-acid polypeptide reads, in one-letter code: Alpha-L-arabinofuranosidase B (486 aa).

The N-terminal stretch at 1–25 is a signal peptide; the sequence is MLSLKAVLRFASVAVAVVLPTLAQA. N-linked (GlcNAc...) asparagine glycosylation is present at Asn-42. Residues 45-342 form a catalytic region; sequence LVKQRADPQI…KLYWRSDGTP (298 aa). Residue Asp-51 is the Proton acceptor of the active site. Glu-229 functions as the Proton donor in the catalytic mechanism. N-linked (GlcNAc...) asparagine glycosylation is found at Asn-302, Asn-416, and Asn-426. Residues 359-467 are ABD; the sequence is SSADQTLYVG…AGSYLVSGGN (109 aa).

The protein belongs to the glycosyl hydrolase 43 family.

It localises to the secreted. The catalysed reaction is Hydrolysis of terminal non-reducing alpha-L-arabinofuranoside residues in alpha-L-arabinosides.. The protein operates within glycan metabolism; L-arabinan degradation. In terms of biological role, secreted arabinofuranosidase that causes degradation of rice cell wall components during infection. Required for virulence. The protein is Alpha-L-arabinofuranosidase B of Pyricularia oryzae (strain 70-15 / ATCC MYA-4617 / FGSC 8958) (Rice blast fungus).